We begin with the raw amino-acid sequence, 397 residues long: Lysophospholipid transporter LplT (397 aa).

Over 1–17 (MSESVHTNTSLWSKGMK) the chain is Periplasmic. A helical membrane pass occupies residues 18–38 (AVIVAQFLSAFGDNALLFATL). The Cytoplasmic segment spans residues 39–52 (ALLKAQFYPEWSQP). A helical membrane pass occupies residues 53–73 (ILQMVFVGAYILFAPFVGQVA). Over 74 to 90 (DSFAKGRVMMFANGLKL) the chain is Periplasmic. Residues 91 to 111 (LGAASICFGINPFLGYTLVGV) traverse the membrane as a helical segment. Over 112 to 144 (GAAAYSPAKYGILGELTTGSKLVKANGLMEAST) the chain is Cytoplasmic. A helical transmembrane segment spans residues 145 to 165 (IAAILLGSVAGGVLADWHILV). Position 166 (A166) is a topological domain, periplasmic. The helical transmembrane segment at 167–187 (LAACALAYGGAVVANIYIPKL) threads the bilayer. The Cytoplasmic segment spans residues 188–226 (AAARPGQSWNLISMTRSFLNACTSLWRNGETRFSLVGTS). Residues 227 to 247 (LFWGAGVTLRFLLVLWVPVAL) form a helical membrane-spanning segment. The Periplasmic segment spans residues 248-256 (GITDNATPT). The helical transmembrane segment at 257–277 (YLNAMVAIGIVVGAGAAAKLV) threads the bilayer. The Cytoplasmic segment spans residues 278-280 (TLE). Residues 281–301 (TVSRCMPAGILIGVVVLIFSL) form a helical membrane-spanning segment. Residues 302–304 (QHE) lie on the Periplasmic side of the membrane. A helical transmembrane segment spans residues 305–325 (LLPAYALLMLIGVLGGFFVVP). The Cytoplasmic segment spans residues 326–343 (LNALLQERGKKSVGAGNA). Residues 344–364 (IAVQNLGENSAMLLMLGIYSL) traverse the membrane as a helical segment. Over 365–366 (AV) the chain is Periplasmic. Residues 367 to 387 (MVGIPVVPIGIGFGALFALAI) traverse the membrane as a helical segment. Topologically, residues 388 to 397 (TALWIWQRRH) are cytoplasmic.

Belongs to the major facilitator superfamily. LplT (TC 2.A.1.42) family.

The protein resides in the cell inner membrane. In terms of biological role, catalyzes the facilitated diffusion of 2-acyl-glycero-3-phosphoethanolamine (2-acyl-GPE) into the cell. This chain is Lysophospholipid transporter LplT, found in Escherichia coli O6:K15:H31 (strain 536 / UPEC).